Here is a 488-residue protein sequence, read N- to C-terminus: 3-octaprenyl-4-hydroxybenzoate carboxy-lyase (488 aa).

N172 is a binding site for Mn(2+). Residues 175–177, 189–191, and 194–195 each bind prenylated FMN; these read IYR, RWL, and RG. E238 contacts Mn(2+). The active-site Proton donor is D287.

Belongs to the UbiD family. In terms of assembly, homohexamer. Prenylated FMN serves as cofactor. The cofactor is Mn(2+).

Its subcellular location is the cell membrane. The enzyme catalyses a 4-hydroxy-3-(all-trans-polyprenyl)benzoate + H(+) = a 2-(all-trans-polyprenyl)phenol + CO2. The protein operates within cofactor biosynthesis; ubiquinone biosynthesis. Functionally, catalyzes the decarboxylation of 3-octaprenyl-4-hydroxy benzoate to 2-octaprenylphenol, an intermediate step in ubiquinone biosynthesis. This chain is 3-octaprenyl-4-hydroxybenzoate carboxy-lyase, found in Azotobacter vinelandii (strain DJ / ATCC BAA-1303).